Reading from the N-terminus, the 281-residue chain is MTARALHYVFKVANRAKTIDFYTKILEMKVLRHEEFDKGCEASCNGPYDERWSKTMIGYGSEDEHFVLELTYNYPIHKYELGNDYRAIVIDSDQLFDKISRIDHRKSGCGRLAVKDPDGHEFKIGKADHAPKVLRVQLNVGDLEKSKKYWNELLGMGIVEEKKTRVRLSFGEGQCELEIVQSGEKIDRKTGFGRIAFSLPGEKLQPLQDKIKSANGTIINELLTLKTPGKADVQVVILADPDAHEICFVGDEGFRDLSKIDDAAEKELREQIQKDDSEKWY.

2 VOC domains span residues 4–127 (RALH…IGKA) and 132–251 (KVLR…FVGD).

Belongs to the glyoxalase I family.

Functionally, thought to act as a glyoxalase. May remove methylglyoxal from mitochondrial proteins. Has roles in reducing oxidative stress and increasing lifespan. This Caenorhabditis briggsae protein is Glyoxalase 1.